The following is a 227-amino-acid chain: UPF0758 protein CPE2144 (227 aa).

The MPN domain occupies 105 to 227 (KISKPSDVAK…FISLKEKDIL (123 aa)). The Zn(2+) site is built by His-176, His-178, and Asp-189. The JAMM motif signature appears at 176–189 (HNHPSGDPTPSRDD).

The protein belongs to the UPF0758 family.

This Clostridium perfringens (strain 13 / Type A) protein is UPF0758 protein CPE2144.